The following is a 629-amino-acid chain: Embryonic polyadenylate-binding protein B (629 aa).

4 consecutive RRM domains span residues 11–89, 99–175, 191–268, and 294–370; these read ASLY…WSQR, GNVF…HFKS, TNVY…RAQK, and VNLY…LAQR. In terms of domain architecture, PABC spans 539 to 616; that stretch reads QEPLTASLLA…AVAVLQAHQA (78 aa).

This sequence belongs to the polyadenylate-binding protein type-1 family. As to quaternary structure, interacts with dazl in an RNA-independent manner. The C-terminus can self-associate and also interact with the C-terminus of pabpc1, independently of RNA. RRM 1 and RRM 2 interact with both eif4g1 and paip1, and the C-terminus also interacts with paip1. Prior to oocyte maturation, found in a complex with dazl and pum2 proteins and spdy1 mRNA; pum2 dissociates from the complex during maturation. Interacts with the translation termination factor sup35/erf3.

Its subcellular location is the cytoplasm. Binds and protects the poly(A) tail of mRNA with or without an AU-rich element (ARE) and prevents mRNA deadenylation. Stimulates the translation of mRNAs to which it is bound during early development. In Xenopus laevis (African clawed frog), this protein is Embryonic polyadenylate-binding protein B (epabp-b).